The primary structure comprises 417 residues: NADH-quinone oxidoreductase subunit D (417 aa).

It belongs to the complex I 49 kDa subunit family. NDH-1 is composed of 14 different subunits. Subunits NuoB, C, D, E, F, and G constitute the peripheral sector of the complex.

The protein resides in the cell inner membrane. It carries out the reaction a quinone + NADH + 5 H(+)(in) = a quinol + NAD(+) + 4 H(+)(out). NDH-1 shuttles electrons from NADH, via FMN and iron-sulfur (Fe-S) centers, to quinones in the respiratory chain. The immediate electron acceptor for the enzyme in this species is believed to be ubiquinone. Couples the redox reaction to proton translocation (for every two electrons transferred, four hydrogen ions are translocated across the cytoplasmic membrane), and thus conserves the redox energy in a proton gradient. The sequence is that of NADH-quinone oxidoreductase subunit D from Legionella pneumophila subsp. pneumophila (strain Philadelphia 1 / ATCC 33152 / DSM 7513).